A 605-amino-acid polypeptide reads, in one-letter code: DNA mismatch repair protein MutL (605 aa).

The protein belongs to the DNA mismatch repair MutL/HexB family.

In terms of biological role, this protein is involved in the repair of mismatches in DNA. It is required for dam-dependent methyl-directed DNA mismatch repair. May act as a 'molecular matchmaker', a protein that promotes the formation of a stable complex between two or more DNA-binding proteins in an ATP-dependent manner without itself being part of a final effector complex. This chain is DNA mismatch repair protein MutL, found in Sinorhizobium medicae (strain WSM419) (Ensifer medicae).